The following is a 265-amino-acid chain: MSRIQSTFAALAAKNKKGLIPFITAGDPAPDLTVPLMHALVAGGADILELGVPFSDPMAEGPVIQRACERALKFNVSLHDVLGFVSEFRKTDTTTPVVLMGYANPIERMGQTAFVLAAKAAGVDGTIVVDYPPEECEEFAATLKANDMDPIFLLSPTSTEERIQQVAKFGSGFSYYVSLKGVTGSANIDTQDVAQRIEAIRKHVKLPIGVGFGIRDAATAKAVATVSDAVVIGSRIIQELENTPRERAVEAAQTFISGIRKALDE.

Active-site proton acceptor residues include Glu49 and Glu60.

Belongs to the TrpA family. In terms of assembly, tetramer of two alpha and two beta chains.

The catalysed reaction is (1S,2R)-1-C-(indol-3-yl)glycerol 3-phosphate + L-serine = D-glyceraldehyde 3-phosphate + L-tryptophan + H2O. The protein operates within amino-acid biosynthesis; L-tryptophan biosynthesis; L-tryptophan from chorismate: step 5/5. In terms of biological role, the alpha subunit is responsible for the aldol cleavage of indoleglycerol phosphate to indole and glyceraldehyde 3-phosphate. This is Tryptophan synthase alpha chain from Herminiimonas arsenicoxydans.